A 519-amino-acid polypeptide reads, in one-letter code: Acetylcholine receptor subunit gamma (519 aa).

Residues 1–22 (MCGGQRPLFLLPLLAVCLGAKG) form the signal peptide. The Extracellular segment spans residues 23-240 (RNQEERLLGD…VVFYLLIQRK (218 aa)). N-linked (GlcNAc...) asparagine glycosylation is found at asparagine 52 and asparagine 163. Cysteine 150 and cysteine 164 are oxidised to a cystine. The next 3 membrane-spanning stretches (helical) occupy residues 241 to 265 (PLFY…IYFL), 274 to 292 (CTVA…FLVA), and 308 to 329 (YLTF…VLNV). Residues 330-476 (SLRSPHTHSM…WFLVGRVLDR (147 aa)) lie on the Cytoplasmic side of the membrane. A helical membrane pass occupies residues 477 to 497 (VCFLAMLSLFVCGTAGIFLMA).

This sequence belongs to the ligand-gated ion channel (TC 1.A.9) family. Acetylcholine receptor (TC 1.A.9.1) subfamily. Gamma/CHRNG sub-subfamily. As to quaternary structure, pentamer of two alpha chains, and one each of the beta, delta, and gamma (in immature muscle) or epsilon (in mature muscle) chains.

The protein resides in the postsynaptic cell membrane. It localises to the cell membrane. It catalyses the reaction K(+)(in) = K(+)(out). The enzyme catalyses Na(+)(in) = Na(+)(out). In terms of biological role, after binding acetylcholine, the AChR responds by an extensive change in conformation that affects all subunits and leads to opening of an ion-conducting channel across the plasma membrane. The chain is Acetylcholine receptor subunit gamma (CHRNG) from Bos taurus (Bovine).